The sequence spans 567 residues: Proline--tRNA ligase (567 aa).

This sequence belongs to the class-II aminoacyl-tRNA synthetase family. ProS type 1 subfamily. As to quaternary structure, homodimer.

Its subcellular location is the cytoplasm. The enzyme catalyses tRNA(Pro) + L-proline + ATP = L-prolyl-tRNA(Pro) + AMP + diphosphate. In terms of biological role, catalyzes the attachment of proline to tRNA(Pro) in a two-step reaction: proline is first activated by ATP to form Pro-AMP and then transferred to the acceptor end of tRNA(Pro). As ProRS can inadvertently accommodate and process non-cognate amino acids such as alanine and cysteine, to avoid such errors it has two additional distinct editing activities against alanine. One activity is designated as 'pretransfer' editing and involves the tRNA(Pro)-independent hydrolysis of activated Ala-AMP. The other activity is designated 'posttransfer' editing and involves deacylation of mischarged Ala-tRNA(Pro). The misacylated Cys-tRNA(Pro) is not edited by ProRS. This is Proline--tRNA ligase from Campylobacter curvus (strain 525.92).